The chain runs to 118 residues: Basic phospholipase A2 PA-12A (118 aa).

7 cysteine pairs are disulfide-bonded: cysteine 11–cysteine 71, cysteine 27–cysteine 117, cysteine 29–cysteine 45, cysteine 44–cysteine 98, cysteine 51–cysteine 91, cysteine 60–cysteine 84, and cysteine 78–cysteine 89. Ca(2+)-binding residues include tyrosine 28, glycine 30, and glycine 32. Histidine 48 is a catalytic residue. Aspartate 49 contributes to the Ca(2+) binding site. The active site involves aspartate 92.

This sequence belongs to the phospholipase A2 family. Group I subfamily. D49 sub-subfamily. Ca(2+) serves as cofactor. As to expression, expressed by the venom gland.

The protein resides in the secreted. It catalyses the reaction a 1,2-diacyl-sn-glycero-3-phosphocholine + H2O = a 1-acyl-sn-glycero-3-phosphocholine + a fatty acid + H(+). PLA2 catalyzes the calcium-dependent hydrolysis of the 2-acyl groups in 3-sn-phosphoglycerides. This is Basic phospholipase A2 PA-12A from Pseudechis australis (Mulga snake).